We begin with the raw amino-acid sequence, 130 residues long: MSRKTLPEKVYLSERIIDEEVAVCTVAAEVLAIFTLVCTRVFIIFFTARICHGIWPSSPSERPYHTFRAARLRNSSKMVSSNCVLSECGQFKRLTANLSQTVSPSHFLNLIKAPLLIAQRCCECASGNGC.

A helical transmembrane segment spans residues Val21–Ile43.

It is found in the membrane. This is an uncharacterized protein from Saccharomyces cerevisiae (strain ATCC 204508 / S288c) (Baker's yeast).